Reading from the N-terminus, the 259-residue chain is Small ribosomal subunit protein uS2 (259 aa).

This sequence belongs to the universal ribosomal protein uS2 family.

This is Small ribosomal subunit protein uS2 from Streptococcus pneumoniae (strain CGSP14).